Consider the following 130-residue polypeptide: uncharacterized protein (130 aa).

The disordered stretch occupies residues 1–104 (MRPGSSPRAP…RGRWGLRGGP (104 aa)). A compositionally biased stretch (low complexity) spans 88 to 97 (RRQPGPQRGR).

This is an uncharacterized protein from Homo sapiens (Human).